Consider the following 231-residue polypeptide: 7-cyano-7-deazaguanine synthase (231 aa).

An ATP-binding site is contributed by 8-18 (FSGGQDSTTCL). Zn(2+)-binding residues include C188, C197, C200, and C203.

The protein belongs to the QueC family. Zn(2+) serves as cofactor.

It catalyses the reaction 7-carboxy-7-deazaguanine + NH4(+) + ATP = 7-cyano-7-deazaguanine + ADP + phosphate + H2O + H(+). Its pathway is purine metabolism; 7-cyano-7-deazaguanine biosynthesis. Functionally, catalyzes the ATP-dependent conversion of 7-carboxy-7-deazaguanine (CDG) to 7-cyano-7-deazaguanine (preQ(0)). The polypeptide is 7-cyano-7-deazaguanine synthase (Salmonella arizonae (strain ATCC BAA-731 / CDC346-86 / RSK2980)).